Consider the following 603-residue polypeptide: Phosphoribosylformylglycinamidine synthase subunit PurL (603 aa).

His-32 is an active-site residue. ATP is bound by residues Tyr-35 and Lys-68. A Mg(2+)-binding site is contributed by Glu-70. Substrate is bound by residues 71 to 74 (SHNH) and Arg-93. His-72 serves as the catalytic Proton acceptor. Position 94 (Asp-94) interacts with Mg(2+). Residues Asp-107 and 136-139 (GELR) each bind ATP. Gly-189 and Gln-208 together coordinate substrate. Residue Asp-236 participates in Mg(2+) binding. 280 to 282 (ESQ) is a substrate binding site. 4 residues coordinate ATP: Gly-388, Lys-429, Asn-442, and Gly-477. A Mg(2+)-binding site is contributed by Asn-478. Residue Ser-480 coordinates substrate. The ATP site is built by Ser-549 and His-556.

Belongs to the FGAMS family. In terms of assembly, monomer. Part of the FGAM synthase complex composed of 1 PurL, 1 PurQ and 2 PurS subunits.

The protein resides in the cytoplasm. It carries out the reaction N(2)-formyl-N(1)-(5-phospho-beta-D-ribosyl)glycinamide + L-glutamine + ATP + H2O = 2-formamido-N(1)-(5-O-phospho-beta-D-ribosyl)acetamidine + L-glutamate + ADP + phosphate + H(+). It functions in the pathway purine metabolism; IMP biosynthesis via de novo pathway; 5-amino-1-(5-phospho-D-ribosyl)imidazole from N(2)-formyl-N(1)-(5-phospho-D-ribosyl)glycinamide: step 1/2. Functionally, part of the phosphoribosylformylglycinamidine synthase complex involved in the purines biosynthetic pathway. Catalyzes the ATP-dependent conversion of formylglycinamide ribonucleotide (FGAR) and glutamine to yield formylglycinamidine ribonucleotide (FGAM) and glutamate. The FGAM synthase complex is composed of three subunits. PurQ produces an ammonia molecule by converting glutamine to glutamate. PurL transfers the ammonia molecule to FGAR to form FGAM in an ATP-dependent manner. PurS interacts with PurQ and PurL and is thought to assist in the transfer of the ammonia molecule from PurQ to PurL. The sequence is that of Phosphoribosylformylglycinamidine synthase subunit PurL from Thermotoga maritima (strain ATCC 43589 / DSM 3109 / JCM 10099 / NBRC 100826 / MSB8).